The following is a 154-amino-acid chain: Deoxyuridine 5'-triphosphate nucleotidohydrolase (154 aa).

Substrate-binding positions include 64–66 (RSG), Asn-77, 81–83 (TVD), and Lys-91.

The protein belongs to the dUTPase family. In terms of assembly, homotrimer. Mg(2+) is required as a cofactor.

It catalyses the reaction dUTP + H2O = dUMP + diphosphate + H(+). It functions in the pathway pyrimidine metabolism; dUMP biosynthesis; dUMP from dCTP (dUTP route): step 2/2. Its function is as follows. This enzyme is involved in nucleotide metabolism: it produces dUMP, the immediate precursor of thymidine nucleotides and it decreases the intracellular concentration of dUTP so that uracil cannot be incorporated into DNA. This chain is Deoxyuridine 5'-triphosphate nucleotidohydrolase, found in Mycobacterium leprae (strain Br4923).